Reading from the N-terminus, the 722-residue chain is Threonine--tRNA ligase 1, cytoplasmic (722 aa).

The span at 1–10 (MSQEKASSPS) shows a compositional bias: polar residues. Residues 1–48 (MSQEKASSPSGKMDGEKPVDASEEKRKEGGKKKSKDGGGDGGRAELNP) are disordered. Positions 13–27 (MDGEKPVDASEEKRK) are enriched in basic and acidic residues. Residues 78 to 142 (DSKPIKVTLP…ETDCTLELLK (65 aa)) form the TGS domain. Lys242 carries the post-translational modification N6-acetyllysine. Thr245 carries the phosphothreonine modification. Tyr297 bears the Phosphotyrosine mark. Thr452 is subject to Phosphothreonine.

It belongs to the class-II aminoacyl-tRNA synthetase family. In terms of assembly, homodimer. Post-translationally, ISGylated.

It localises to the cytoplasm. The catalysed reaction is tRNA(Thr) + L-threonine + ATP = L-threonyl-tRNA(Thr) + AMP + diphosphate + H(+). In terms of biological role, catalyzes the attachment of threonine to tRNA(Thr) in a two-step reaction: threonine is first activated by ATP to form Thr-AMP and then transferred to the acceptor end of tRNA(Thr). Also edits incorrectly charged tRNA(Thr) via its editing domain, at the post-transfer stage. The chain is Threonine--tRNA ligase 1, cytoplasmic (Tars1) from Mus musculus (Mouse).